The following is a 78-amino-acid chain: Translation initiation factor IF-1, chloroplastic (78 aa).

The S1-like domain maps to 1-72; it reads MEKQNLIDME…TKGRITYRLR (72 aa).

Belongs to the IF-1 family. In terms of assembly, component of the 30S ribosomal translation pre-initiation complex which assembles on the 30S ribosome in the order IF-2 and IF-3, IF-1 and N-formylmethionyl-tRNA(fMet); mRNA recruitment can occur at any time during PIC assembly.

The protein localises to the plastid. It is found in the chloroplast. In terms of biological role, one of the essential components for the initiation of protein synthesis. Stabilizes the binding of IF-2 and IF-3 on the 30S subunit to which N-formylmethionyl-tRNA(fMet) subsequently binds. Helps modulate mRNA selection, yielding the 30S pre-initiation complex (PIC). Upon addition of the 50S ribosomal subunit IF-1, IF-2 and IF-3 are released leaving the mature 70S translation initiation complex. The protein is Translation initiation factor IF-1, chloroplastic of Anthoceros angustus (Hornwort).